We begin with the raw amino-acid sequence, 180 residues long: Large ribosomal subunit protein uL5 (180 aa).

This sequence belongs to the universal ribosomal protein uL5 family. In terms of assembly, part of the 50S ribosomal subunit; part of the 5S rRNA/L5/L18/L25 subcomplex. Contacts the 5S rRNA and the P site tRNA. Forms a bridge to the 30S subunit in the 70S ribosome.

This is one of the proteins that bind and probably mediate the attachment of the 5S RNA into the large ribosomal subunit, where it forms part of the central protuberance. In the 70S ribosome it contacts protein S13 of the 30S subunit (bridge B1b), connecting the 2 subunits; this bridge is implicated in subunit movement. Contacts the P site tRNA; the 5S rRNA and some of its associated proteins might help stabilize positioning of ribosome-bound tRNAs. The chain is Large ribosomal subunit protein uL5 from Limosilactobacillus fermentum (strain NBRC 3956 / LMG 18251) (Lactobacillus fermentum).